The chain runs to 337 residues: Large ribosomal subunit protein uL10 (337 aa).

The segment at 309 to 337 (EEVVEEQEEVKEEEEEESDMASGLGALFG) is disordered. The segment covering 310–327 (EVVEEQEEVKEEEEEESD) has biased composition (acidic residues).

It belongs to the universal ribosomal protein uL10 family. As to quaternary structure, part of the 50S ribosomal subunit. Forms part of the ribosomal stalk which helps the ribosome interact with GTP-bound translation factors. Forms a heptameric L10(L12)2(L12)2(L12)2 complex, where L10 forms an elongated spine to which the L12 dimers bind in a sequential fashion.

Forms part of the ribosomal stalk, playing a central role in the interaction of the ribosome with GTP-bound translation factors. The sequence is that of Large ribosomal subunit protein uL10 from Methanococcoides burtonii (strain DSM 6242 / NBRC 107633 / OCM 468 / ACE-M).